The sequence spans 3945 residues: MDFLRSLDWTQVIAGQYVSNPRFNISDYFEIVRQPGDGNCFYHSIAELTMPNKTDHSYHYIKRLTESAARKYYQEEPEARLVGLSLEDYLKRMLSDNEWGSTLEASMLAKEMGITIIIWTVAASDEVEAGIKFGDGDVFTAVNLLHSGQTHFDALRILPQFETDTREALSLMDRVIAVDQLTSSSSDELQDYEDLALALTSAEESNRRSSLDEVTLSKKQAEILRQKASQLSKLVNKSQNIPTRVGRVLDCMFNCKLCVEISADTLILRPESKEKIGEIMSLRQLGHKLLTRDKQIKQEFSRMKLYVTKDLLDHLDVGGLLRAAFPGTGIERHMQLLHSEMILDICTVSLGVMLSTFLYGSNNKNKKKFITNCLLSTALSGKKVYKVLGNLGNELLYKAPRKALATVCSALFGKQINKLQNCFRTISPVSLLALRNLDFDCLSVQDYNGMIENMSKLDNTDVEFNHREIADLNQLTSRLITLRKEKDTDLLKQWFPESDLTRRSIRNAANAEEFVISEFFKKKDIMKFISTSGRAMSAGKIGNVLSYAHNLYLSKSSLNMTSEDISQLLIEIKRLYALQEDSEVEPIAIICDGIESNMKQLFAILPPDCARECEVLFDDIRNSPTHSTAWKHALRLKGTAYEGLFANCYGWQYIPEDIKPSLTMLIQTLFPDKFEDFLDRTQLHPEFRDLTPDFSLTQKVHFKRNQIPSVENVQISIDATLPESVEAVPVTERKMFPLPETPLSEVHSIERIMENFTRLMHGGRLSTKKRDGDPAEQGNQQSITEHESSSISAFKDYGERGIVEENHMKFSGEDQLETRQLLLVEVGFQTDIDGKIRTDHKKWKDILKLLELLGIKCSFIACADCSSTPPDRWWITEDRVRVLKNSVSFLFNKLSRNSPTEVTDIVVGAISTQKVRSYLKAGTATKTPVSTKDVLETWEKMKEHILNRPTGLTLPTSLEQAMRKGLVEGVVISKEGSESCINMLKENLDRITDEFERTKFKHELTQNITTSEKMLLSWLSEDIKSSRCGECLSNIKKAVDETANLSEKIELLAYNLQLTNHCSNCHPNGVNISNTSNVCKRCPKIEVVSHCENKGFEDSNECLTDLDRLVRLTLPGKTEKERRVKRNVEYLIKLMMSMSGIDCIKYPTGQLITHGRVSAKHNDGNLKDRSDDDQRLAEKIDTVRKELSESKLKDYSTYARGVISNSLKNLSRQGKSKCSVPRSWLEKVLFDLKVPTKDEEVLINIRNSLKARSEFVRNNDKLLIRSKEELKKCFDVQSFKLKKNKQPVPFQVDCILFKEVAAECMKRYIGTPYEGIVDTLVSLINVLTRFTWFQEVVLYGKICETFLRCCTEFNRSGVKLVKIRHCNINLSVKLPSNKKENMLCCLYSGNMELLQGPFYLNRRQAVLGSSYLYIVITLYIQVLQQYRCLEVINSVSEKTLQDIENHSMTLLEDSFREITFALEGRFEESYKIRTSRCRASGNFLNRSSRDHFISVVSGLNLVYGFLIKDNLLANSQQQNKQLQMLRFGMLAGLSRLVCPNELGKKFSTSCRRIEDNIARLYLQTSIYCSVRDVEDNVKHWKQRDLCPEVTIPCFTVYGTFVNSDRQLIFDIYNVHIYNKEMDNFDEGCISVLEETAERHMLWELDLMNSLCSDEKKDTRTARLLLGCPNVRKAANREGKKLLKLNSDTSTDTQSIASEVSDRRSYSSSKSRIRSIFGRYNSQKKPFELRSGLEVFNDPFNDYQQAITDICQFSEYTPNKESILKDCLQIIRKNPSHTMGSFELIQAISEFGMSKFPPENIDKARRDPKNWVSISEVTETTSIVASPRTHMMLKDCFKIILGTENKKIVKMLRGKLKKLGAISTNIEIGKRDCLDLLSTVDGLTDQQKENIVNGIFEPSKLSFYHWKELVKKNIDEVLLTEDGNLIFCWLKTISSSVKGSLKKRLKFMNIHSPELMPENCLFSSEEFNELIKLKKLLLNEQQDEQELKQDLLISSWIKCITACKDFASINDKIQKFIYHLSEELYDIRLQHLELSKLKQEHPSVSFTKEEVLIKRLEKNFLKQHNLEIMETVNLVFFAALSAPWCLHYKALESYLVRHPEILDCGSKEDCKLTLLDLSVSKLLVCLYQKDDEELINSSSLKLGFLVKYVVTLFTSNGEPFSLSLNDGGLDLDLHKTTDEKLLHQTKIVFAKIGLSGNSYDFIWTTQMIANSNFNVCKRLTGRSTGERLPRSVRSKVIYEMVKLVGETGMAILQQLAFAQALNYEHRFYAVLAPKAQLGGARDLLVQETGTKVMHATTEMFSRNLLKTTSDDGLTNPHLKETILNVGLDCLANMRNLDGKPISEGSNLVNFYKVICISGDNTKWGPIHCCSFFSGMMQQVLKNVPDWCSFYKLTFIKNLCRQVEIPAGSIKKILNVLRYRLCSKGGVEQHSEEDLRRLLTDNLDSWDGNDTVKFLVTTYISKGLMALNSYNHMGQGIHHATSSVLTSLAAVLFEELAIFYLKRSLPQTTVHVEHAGSSDDYAKCIVVTGILSKELYSQYDETFWKHACRLKNFTAAVQRCCQMKDSAKTLVSDCFLEFYSEFMMGYRVTPAVIKFMFTGLINSSVTSPQSLMQACQVSSQQAMYNSVPLVTNTAFTLLRQQIFFNHVEDFIRRYGILTLGTLSPFGRLFVPTYSGLVSSAVALEDAEVIARAAQTLQMNSVSIQSSSLTTLDSLGRSRTSSTAEDSSSVSDTTAASHDSGSSSSSFSFELNRPLSETELQFIKALSSLKSTQACEVIQNRITGLYCNSNEGPLDRHNVIYSSRMADSCDWLKDGKRRGNLELANRIQSVLCILIAGYYRSFGGEGTEKQVKASLNRDDNKIIEDPMIQLIPEKLRRELERLGVSRMEVDELMPSISPDDTLAQLVAKKLISLNVSTEEYSAEVSRLKQTLTARNVLHGLAGGIKELSLPIYTIFMKSYFFKDNVFLSLTDRWSTKHSTNYRDSCGKQLKGRIITKYTHWLDTFLGCSVSINRHTTVKEPSLFNPNIRCVNLITFEDGLRELSVIQSHLKVFENEFTNLNLQFSDPNRQKLRIVESRPAESELEANRAVIVKTKLFSATEQVRLSNNPAVVMGYLLDESAISEVKPTKVDFSNLLKDRFKIMQFFPSVFTLIKMLTDESSDSEKSGLSPDLQQVARYSNHLTLLSRMIQQAKPTVTVFYMLKGNLMNTEPTVAELVSYGIKEGRFFRLSDTGVDASTYSVKYWKILHCISAIGCLPLSQADKSSLLMSFLNWRVNMDIRTSDCPLSSHEASILSEFDGQVIANILASELSSVKRDSEREGLTDLLDYLNSPTELLKKKPYLGTTCKFNTWGDSNRSGKFTYSSRSGESIGIFIAGKLHIHLSSESVALLCETERQVLSWMSKRRTEVITKEQHQLFLSLLPQSHECLQKHKDGSALSVIPDSSNPRLLKFVPLKKGLAVVKIKKQILTVKKQVVFDAESEPRLQWGHGCLSIVYDETDTQTTYHENLLKVKHLVDCSTDRKKLLPQSVFSDSKVVLSRIKFKTELLLNSLTLLHCFLKHAPSDAIMEVESKSSLLHKYLKSGGVRQRNTEVLFREKLNKVVIKDNLEQGVEEEIEFCNNLTKTVSENPLPLSCWSEVQNYIEDIGFNNVLVNIDRNTVKSELLWKFTLDTNVSTTSTIKDVRTLVSYVSTETIPKFLLAFLLYEEVLMNLINQCKAVKELINSTGLSDLELESLLTLCAFYFQSECSKRDGPRCSFAALLSLIHEDWQRIGKNILVRANNELGDVSLKVNIVLVPLKDMSKPKSERVVMARRSLNHALSLMFLDEMSLPELKSLSVNCKMGNFEGQECFEFTILKDNSARLDYNKLIDHCVDMEKKREAVRAVEDLILMLTGRAVKPSAVTQFVHGDEQCQEQISLDDLMANDTVTDFPDREAEALKTGNLGFNWDSD.

The tract at residues 1 to 28 (MDFLRSLDWTQVIAGQYVSNPRFNISDY) is essential for the vOTU enzymatic activity. One can recognise an OTU domain in the interval 29–158 (FEIVRQPGDG…QTHFDALRIL (130 aa)). Residues Cys40, His151, and Asp153 each act as for ubiquitin thioesterase activity in the active site. The segment at 625-806 (THSTAWKHAL…YGERGIVEEN (182 aa)) is endonuclease. Mn(2+) contacts are provided by His632, Asp693, and Asp718. The active-site For endonuclease activity is Lys734. The interval 763–790 (GRLSTKKRDGDPAEQGNQQSITEHESSS) is disordered. The RdRp catalytic domain maps to 2342-2551 (EGSNLVNFYK…WKHACRLKNF (210 aa)). Residue Asp2518 participates in Mg(2+) binding. Positions 2712–2744 (LGRSRTSSTAEDSSSVSDTTAASHDSGSSSSSF) are disordered. The span at 2715–2744 (SRTSSTAEDSSSVSDTTAASHDSGSSSSSF) shows a compositional bias: low complexity.

The protein belongs to the Bunyavirales RNA polymerase family. In terms of assembly, interacts (via N-terminus) with host ISG15 (via C-terminus); the deISGylase activity of the viral protein interferes with antiviral signaling pathways mediated by NF-kappaB and IRF signalings. Interacts with host ubiquitin.

It carries out the reaction Thiol-dependent hydrolysis of ester, thioester, amide, peptide and isopeptide bonds formed by the C-terminal Gly of ubiquitin (a 76-residue protein attached to proteins as an intracellular targeting signal).. It catalyses the reaction RNA(n) + a ribonucleoside 5'-triphosphate = RNA(n+1) + diphosphate. Functionally, displays RNA-directed RNA polymerase, deubiquitinating and deISGylase activities. RNA-dependent RNA polymerase is responsible for replication and transcription of the viral RNA genome. During transcription, synthesizes subgenomic RNAs and assures their capping by a cap-snatching mechanism, which involves the endonuclease activity cleaving the host capped pre-mRNAs. These short capped RNAs are then used as primers for viral transcription. The deubiquitinating and deISGylating activities specifically cleaves poly-ubiquitinated conjugates and ISG15 from RIG-I, interfering with antiviral signaling pathways mediated by NF-kappaB and IRF signalings. Deubiquitinates mono-ubiquitinated, K48- and K63-linked tetra-ubiquitinated molecules. Favors K63 poly-Ub linkage. The chain is RNA-directed RNA polymerase L (L) from Crimean-Congo hemorrhagic fever virus (strain Nigeria/IbAr10200/1970) (CCHFV).